Here is a 271-residue protein sequence, read N- to C-terminus: MKMELLIKAFIMGIVEGLTEFLPISSTGHLIIVGSFIKFTGKFATMFEIVIQLGAILAVVYYFKDKILSSLKALKPGEWGFNLWYKTFIAFLPAAIIGILTHHYIEEHLFSPFTVAIALIVGAIMMIVIEDIFGKKYKIDNMDKVSTSKAFWIGVAQVMSLFPGMSRSASTIMGGMLVGLSVRAAAEFSFFLAIPTMLAATGFELVKNITSMSLLEWEALAVGFIMSFITALIVVDKFLAYLKRHVLKPFAYYRLLVGVLMLFLIAQKIVK.

8 helical membrane-spanning segments follow: residues 5–25 (LLIKAFIMGIVEGLTEFLPIS), 43–63 (FATMFEIVIQLGAILAVVYYF), 80–100 (GFNLWYKTFIAFLPAAIIGIL), 109–129 (LFSPFTVAIALIVGAIMMIVI), 145–165 (VSTSKAFWIGVAQVMSLFPGM), 186–206 (AEFSFFLAIPTMLAATGFELV), 215–235 (LEWEALAVGFIMSFITALIVV), and 246–266 (VLKPFAYYRLLVGVLMLFLIA).

The protein belongs to the UppP family.

The protein resides in the cell membrane. The catalysed reaction is di-trans,octa-cis-undecaprenyl diphosphate + H2O = di-trans,octa-cis-undecaprenyl phosphate + phosphate + H(+). Catalyzes the dephosphorylation of undecaprenyl diphosphate (UPP). Confers resistance to bacitracin. This is Undecaprenyl-diphosphatase from Caldanaerobacter subterraneus subsp. tengcongensis (strain DSM 15242 / JCM 11007 / NBRC 100824 / MB4) (Thermoanaerobacter tengcongensis).